The sequence spans 156 residues: Small ribosomal subunit protein uS7 (156 aa).

It belongs to the universal ribosomal protein uS7 family. In terms of assembly, part of the 30S ribosomal subunit. Contacts proteins S9 and S11.

One of the primary rRNA binding proteins, it binds directly to 16S rRNA where it nucleates assembly of the head domain of the 30S subunit. Is located at the subunit interface close to the decoding center, probably blocks exit of the E-site tRNA. The polypeptide is Small ribosomal subunit protein uS7 (Vibrio campbellii (strain ATCC BAA-1116)).